Consider the following 577-residue polypeptide: MNIQALLSEKVRQAMIAAGAPADCEPQVRQSAKVQFGDYQANGMMAVAKKLGMAPRQLAEQVLTHLDLNGIASKVEIAGPGFINIFLDPTFLAENVQQALKSDRLGVATPEKQTIVVDYSAPNVAKEMHVGHLRSTIIGDAAVRTLEFLGHKVIRANHVGDWGTQFGMLIAWLEKQQQENAGEMALADLEGFYRDAKKHYDEDEEFAERARNYVVKLQSGDEYFREMWRKLVDITMTQNQITYDRLNVTLTRDDVMGESLYNPMLPGIVADLKAKGLAVESEGATVVFLDEFKNKEGDPMGVIIQKKDGGYLYTTTDIACAKYRYETLHADRVLYYIDSRQHQHLMQAWAIVRKAGYVPESVPLEHHMFGMMLGKDGKPFKTRAGGTVKLADLLDEALERARRLVAEKNPDMPADELEKLANAVGIGAVKYADLSKNRTTDYVFDWDNMLAFEGNTAPYMQYAYTRVLSVFRKAEIAEEELAAAPVIIREDREAQLAARLLQFEETLTVVAREGTPHVMCAYLYDLAGLFSSFYEHCPILSAENEEVRNSRLKLALLTAKTLKLGLDTLGIETVERM.

The 'HIGH' region signature appears at 122–132 (PNVAKEMHVGH).

Belongs to the class-I aminoacyl-tRNA synthetase family. Monomer.

It is found in the cytoplasm. It carries out the reaction tRNA(Arg) + L-arginine + ATP = L-arginyl-tRNA(Arg) + AMP + diphosphate. The chain is Arginine--tRNA ligase from Escherichia fergusonii (strain ATCC 35469 / DSM 13698 / CCUG 18766 / IAM 14443 / JCM 21226 / LMG 7866 / NBRC 102419 / NCTC 12128 / CDC 0568-73).